Reading from the N-terminus, the 85-residue chain is Actobindin homolog (85 aa).

One can recognise a WH2 domain in the interval 35–52 (DRNELLSGIKEGKELKKA).

Its function is as follows. Is able to bind two actin monomers at high concentrations of G-actin. This is Actobindin homolog from Entamoeba histolytica.